Consider the following 271-residue polypeptide: Zinc finger protein 501 (271 aa).

9 C2H2-type zinc fingers span residues 22–44 (SKCS…QRIH), 50–72 (YVCS…LRIH), 78–100 (YKCN…LRIH), 106–128 (YKCN…QRIH), 134–156 (YKCT…QRSH), 162–184 (FKCN…QRIH), 190–212 (YTCT…ERTH), 218–240 (YKCS…YRIH), and 246–268 (YECV…QRLH).

Belongs to the krueppel C2H2-type zinc-finger protein family.

Its subcellular location is the nucleus. It localises to the nucleolus. Its function is as follows. May be involved in transcriptional regulation. Essential for Golgi structural integrity. This Homo sapiens (Human) protein is Zinc finger protein 501 (ZNF501).